The following is a 282-amino-acid chain: Elongation factor Ts (282 aa).

The involved in Mg(2+) ion dislocation from EF-Tu stretch occupies residues 80 to 83 (TDFV).

It belongs to the EF-Ts family.

It is found in the cytoplasm. Functionally, associates with the EF-Tu.GDP complex and induces the exchange of GDP to GTP. It remains bound to the aminoacyl-tRNA.EF-Tu.GTP complex up to the GTP hydrolysis stage on the ribosome. The protein is Elongation factor Ts of Chlamydia trachomatis serovar L2 (strain ATCC VR-902B / DSM 19102 / 434/Bu).